A 130-amino-acid polypeptide reads, in one-letter code: Putative antitoxin VapB50 (130 aa).

Its function is as follows. Possibly the antitoxin component of a type II toxin-antitoxin (TA) system. Its cognate toxin is VapC50. The sequence is that of Putative antitoxin VapB50 from Mycobacterium tuberculosis (strain ATCC 25618 / H37Rv).